The chain runs to 145 residues: Large ribosomal subunit protein uL13 (145 aa).

It belongs to the universal ribosomal protein uL13 family. In terms of assembly, part of the 50S ribosomal subunit.

Functionally, this protein is one of the early assembly proteins of the 50S ribosomal subunit, although it is not seen to bind rRNA by itself. It is important during the early stages of 50S assembly. The polypeptide is Large ribosomal subunit protein uL13 (Geobacillus sp. (strain WCH70)).